The primary structure comprises 144 residues: Large ribosomal subunit protein uL15 (144 aa).

The interval methionine 1–glycine 53 is disordered. Residues arginine 21–serine 31 are compositionally biased toward gly residues.

It belongs to the universal ribosomal protein uL15 family. In terms of assembly, part of the 50S ribosomal subunit.

Binds to the 23S rRNA. The chain is Large ribosomal subunit protein uL15 from Histophilus somni (strain 129Pt) (Haemophilus somnus).